An 819-amino-acid polypeptide reads, in one-letter code: Protein O-mannosyl-transferase tmem260 (819 aa).

The segment covering Met-1–Thr-10 has biased composition (polar residues). Residues Met-1–Asn-68 are disordered. Over residues Asn-15 to Asn-68 the composition is skewed to low complexity. Residues Asn-18, Asn-38, and Asn-70 are each glycosylated (N-linked (GlcNAc...) asparagine). Transmembrane regions (helical) follow at residues Ile-113–Pro-133, Val-152–Ile-172, Phe-185–Trp-205, Trp-210–Ile-230, Gly-232–Tyr-252, Leu-285–Ile-305, and Ile-316–Ile-336. The N-linked (GlcNAc...) asparagine glycan is linked to Asn-349. 4 consecutive transmembrane segments (helical) span residues Leu-391–Leu-411, Met-427–Ile-447, Phe-459–Phe-479, and Tyr-505–Leu-525. N-linked (GlcNAc...) asparagine glycans are attached at residues Asn-531, Asn-686, Asn-693, and Asn-783.

This sequence belongs to the glycosyltransferase 117 (GT117) family.

It localises to the endoplasmic reticulum membrane. The catalysed reaction is a di-trans,poly-cis-dolichyl beta-D-mannosyl phosphate + L-seryl-[protein] = 3-O-(alpha-D-mannosyl)-L-seryl-[protein] + a di-trans,poly-cis-dolichyl phosphate + H(+). The enzyme catalyses a di-trans,poly-cis-dolichyl beta-D-mannosyl phosphate + L-threonyl-[protein] = 3-O-(alpha-D-mannosyl)-L-threonyl-[protein] + a di-trans,poly-cis-dolichyl phosphate + H(+). In terms of biological role, O-mannosyl-transferase that transfers mannosyl residues to the hydroxyl group of serine or threonine residues of proteins. The protein is Protein O-mannosyl-transferase tmem260 of Dictyostelium discoideum (Social amoeba).